The chain runs to 459 residues: Zinc finger chaperone zpr1 (459 aa).

2 C4-type zinc fingers span residues Cys38 to Cys70 and Cys259 to Cys291.

This sequence belongs to the ZPR1 family.

The protein localises to the cytoplasm. It is found in the nucleus. Acts as a protein folding chaperone for elongation factor 1-alpha. The polypeptide is Zinc finger chaperone zpr1 (Schizosaccharomyces pombe (strain 972 / ATCC 24843) (Fission yeast)).